The following is a 244-amino-acid chain: Biosynthetic peptidoglycan transglycosylase (244 aa).

Residues 25–45 (LLLLLAIALLYQSWFLLHIIY) form a helical membrane-spanning segment.

It belongs to the glycosyltransferase 51 family.

The protein resides in the cell inner membrane. The catalysed reaction is [GlcNAc-(1-&gt;4)-Mur2Ac(oyl-L-Ala-gamma-D-Glu-L-Lys-D-Ala-D-Ala)](n)-di-trans,octa-cis-undecaprenyl diphosphate + beta-D-GlcNAc-(1-&gt;4)-Mur2Ac(oyl-L-Ala-gamma-D-Glu-L-Lys-D-Ala-D-Ala)-di-trans,octa-cis-undecaprenyl diphosphate = [GlcNAc-(1-&gt;4)-Mur2Ac(oyl-L-Ala-gamma-D-Glu-L-Lys-D-Ala-D-Ala)](n+1)-di-trans,octa-cis-undecaprenyl diphosphate + di-trans,octa-cis-undecaprenyl diphosphate + H(+). The protein operates within cell wall biogenesis; peptidoglycan biosynthesis. Peptidoglycan polymerase that catalyzes glycan chain elongation from lipid-linked precursors. The polypeptide is Biosynthetic peptidoglycan transglycosylase (Nitrosomonas eutropha (strain DSM 101675 / C91 / Nm57)).